The sequence spans 409 residues: Elongation factor Tu, cyanelle (409 aa).

A tr-type G domain is found at 10-214 (KPHVNIGTIG…AVDEYIPTPE (205 aa)). Residues 19–26 (GHVDHGKT) are G1. Residue 19-26 (GHVDHGKT) participates in GTP binding. Thr-26 provides a ligand contact to Mg(2+). A G2 region spans residues 60 to 64 (GITIN). Residues 81–84 (DCPG) are G3. GTP is bound by residues 81–85 (DCPGH) and 136–139 (NKED). A G4 region spans residues 136–139 (NKED). Positions 174–176 (SAL) are G5.

It belongs to the TRAFAC class translation factor GTPase superfamily. Classic translation factor GTPase family. EF-Tu/EF-1A subfamily.

It is found in the plastid. It localises to the cyanelle. The catalysed reaction is GTP + H2O = GDP + phosphate + H(+). In terms of biological role, GTP hydrolase that promotes the GTP-dependent binding of aminoacyl-tRNA to the A-site of ribosomes during protein biosynthesis. This chain is Elongation factor Tu, cyanelle (tufA), found in Cyanophora paradoxa.